We begin with the raw amino-acid sequence, 160 residues long: uncharacterized protein (160 aa).

Residues Leu-47–Tyr-67 form a helical membrane-spanning segment.

It is found in the membrane. This is an uncharacterized protein from Sinorhizobium fredii (strain NBRC 101917 / NGR234).